A 254-amino-acid polypeptide reads, in one-letter code: Dihydroorotate dehydrogenase B (NAD(+)), electron transfer subunit (254 aa).

The FAD-binding FR-type domain occupies 1–99 (MLQTEMKVIQ…LGPLGKGFDI (99 aa)). Residues 50–53 (RPIS), 67–69 (LYR), and 74–75 (GT) contribute to the FAD site. [2Fe-2S] cluster contacts are provided by cysteine 218, cysteine 223, cysteine 226, and cysteine 241.

Belongs to the PyrK family. Heterotetramer of 2 PyrK and 2 PyrD type B subunits. The cofactor is [2Fe-2S] cluster. It depends on FAD as a cofactor.

The protein operates within pyrimidine metabolism; UMP biosynthesis via de novo pathway; orotate from (S)-dihydroorotate (NAD(+) route): step 1/1. In terms of biological role, responsible for channeling the electrons from the oxidation of dihydroorotate from the FMN redox center in the PyrD type B subunit to the ultimate electron acceptor NAD(+). This is Dihydroorotate dehydrogenase B (NAD(+)), electron transfer subunit from Listeria welshimeri serovar 6b (strain ATCC 35897 / DSM 20650 / CCUG 15529 / CIP 8149 / NCTC 11857 / SLCC 5334 / V8).